The following is a 1726-amino-acid chain: Probable serine/threonine-protein kinase roco4 (1726 aa).

4 LRR repeats span residues 256 to 277 (KGKRLSLSRSNLSRFPMSITQM), 280 to 301 (HLVELDLSDNKITELPKDIQLL), 303 to 324 (SLRILILRGNLLEDIPLEICYL), and 326 to 347 (DLKILELQENPLNNFPLSVVQS). In terms of domain architecture, Roc spans 364-544 (KSETWNKVKL…KRLIHEAEKS (181 aa)). Residues 377–384 (GQEGVGKT), 428–432 (DFGGQ), and 487–490 (THSD) each bind GTP. The COR domain maps to 591–787 (AINSQKERYI…RTYWRNGVLL (197 aa)). The span at 800 to 881 (SKQQQLQQQQ…STLNSQQLIN (82 aa)) shows a compositional bias: low complexity. The interval 800–890 (SKQQQLQQQQ…NPSVSPLSST (91 aa)) is disordered. The 267-residue stretch at 1026–1292 (IEYEKQIGKG…SYIVKELSEL (267 aa)) folds into the Protein kinase domain. ATP contacts are provided by residues 1032-1040 (IGKGGFGLV) and Lys1055. Asp1154 functions as the Proton acceptor in the catalytic mechanism. Positions 1319-1331 (ASTSSNADDGSQT) are enriched in polar residues. Positions 1319 to 1385 (ASTSSNADDG…SSPSTSFINS (67 aa)) are disordered. A compositionally biased stretch (low complexity) spans 1332 to 1348 (NNNNNNNNNNNNNNNNN). Positions 1349-1364 (SGSSIALSPSRSFEQQ) are enriched in polar residues. Residues 1365–1381 (TTTTTTTTTSPSSPSTS) are compositionally biased toward low complexity. WD repeat units follow at residues 1422–1461 (SVHKKMEVLAGVEAGETVWTKSADSSLCFWSTKKGHLINE), 1463–1502 (KCPHTVATTMMIKVGKYIWEATNSNGIYIWDMGTMTIVQQ), 1506–1546 (PHKG…KKHS), 1589–1627 (KHSTGSITSILAMKDEVWSGGSDGRIYIWKVKNEFELQK), 1633–1670 (AHHEKITSLIHLEDNVLSGSTDKCISLFKISDPKKPFT), and 1674–1714 (HHKQ…EKKT).

The protein belongs to the protein kinase superfamily. TKL Ser/Thr protein kinase family. ROCO subfamily.

It catalyses the reaction L-seryl-[protein] + ATP = O-phospho-L-seryl-[protein] + ADP + H(+). It carries out the reaction L-threonyl-[protein] + ATP = O-phospho-L-threonyl-[protein] + ADP + H(+). The sequence is that of Probable serine/threonine-protein kinase roco4 (roco4) from Dictyostelium discoideum (Social amoeba).